Consider the following 466-residue polypeptide: Cytochrome P450 85A (466 aa).

The helical transmembrane segment at 2–22 (ALFMAILGVLVLLLCLCSALL) threads the bilayer. Cysteine 414 is a heme binding site.

It belongs to the cytochrome P450 family. The cofactor is heme.

Its subcellular location is the membrane. Functionally, catalyzes the C6-oxidation step in brassinosteroids biosynthesis. The polypeptide is Cytochrome P450 85A (Phaseolus vulgaris (Kidney bean)).